Reading from the N-terminus, the 375-residue chain is MAPGETEREAGPAKSALQKVRRATLVINLARGWQQWANENSTRQAQEPAGWLPGATQDLPHTPKEPGPRQHAPKPPSPKPDGDREGRGSEEATEVSHIKRKEVTRTVVSKAYERGGDVNYLSHRYEHDGGVSEAVQPDNDIDRILLSHDSPTRRRKCTNLVSELTKGWKVMEQEEPKWKSDSIDTEDSGYGGDMEERPEQDVAQVAAARIKRPLHSQANRYSETLNCKAHRKYSQVDNLKGRWQQWADEHIQSQKLNPFSDEFDYDLAMSTRLHKGDEGYGRPKEGSKTAERAKRAEEHIYREIMELCFVIRTMARHRRDGKIQVTFGELFDRYVRISDKVVGILMRARKHGLVHFEGEMLWQGKDDHVVITLLE.

The segment at 37–101 (ANENSTRQAQ…ATEVSHIKRK (65 aa)) is disordered. Residues 80–101 (PDGDREGRGSEEATEVSHIKRK) show a composition bias toward basic and acidic residues. Phosphoserine occurs at positions 150 and 182. The segment at 175-197 (EPKWKSDSIDTEDSGYGGDMEER) is disordered. 2 actin-binding regions span residues 193–293 (DMEE…AERA) and 294–375 (KRAE…TLLE). Interaction with actin regions lie at residues 234-279 (SQVD…GDEG) and 346-375 (MRAR…TLLE).

As to quaternary structure, binds F-actin and ABLIM1, ABLIM2 and ABLIM3. Interaction with ABLIM2 and ABLIM3 enhances activity. Predominantly expressed in heart and skeletal muscle, and expressed at lower levels in adrenal gland, brain, kidney, liver, and testis.

The protein localises to the cytoplasm. Its subcellular location is the myofibril. The protein resides in the sarcomere. It is found in the cytoskeleton. In terms of biological role, acts as an activator of serum response factor (SRF)-dependent transcription possibly by inducing nuclear translocation of MKL1 or MKL2 and through a mechanism requiring Rho-actin signaling. The chain is Actin-binding Rho-activating protein from Rattus norvegicus (Rat).